The sequence spans 541 residues: Putative acyl-CoA dehydrogenase AidB (541 aa).

FAD is bound by residues 182 to 191 (MGMTEKQGGS), threonine 185, serine 191, 216 to 218 (FFS), serine 218, 423 to 433 (IWEGSGNIMCL), and asparagine 429. The interval 445 to 541 (VYDLLSEAFV…LLRATGGVCV (97 aa)) is dsDNA-binding.

This sequence belongs to the acyl-CoA dehydrogenase family. In terms of assembly, homotetramer. Dimer of dimers. Requires FAD as cofactor.

It is found in the cytoplasm. Functionally, part of the adaptive DNA-repair response to alkylating agents. Could prevent alkylation damage by protecting DNA and destroying alkylating agents that have yet to reach their DNA target. Binds to double-stranded DNA with a preference for a DNA region that includes its own promoter. Shows weak isovaleryl-CoA dehydrogenase activity in vitro. This Escherichia coli (strain K12) protein is Putative acyl-CoA dehydrogenase AidB (aidB).